Reading from the N-terminus, the 186-residue chain is UPF0340 protein SZO_02480 (186 aa).

The protein belongs to the UPF0340 family.

The protein is UPF0340 protein SZO_02480 of Streptococcus equi subsp. zooepidemicus (strain H70).